A 351-amino-acid chain; its full sequence is uncharacterized protein (351 aa).

Positions 215, 226, 290, 319, and 333 each coordinate Mn(2+).

The protein belongs to the peptidase M24B family. Requires Mn(2+) as cofactor.

This is an uncharacterized protein from Staphylococcus aureus (strain MW2).